Reading from the N-terminus, the 77-residue chain is Large ribosomal subunit protein eL20 (77 aa).

The protein belongs to the eukaryotic ribosomal protein eL20 family. Part of the 50S ribosomal subunit. Binds 23S rRNA.

This Thermococcus gammatolerans (strain DSM 15229 / JCM 11827 / EJ3) protein is Large ribosomal subunit protein eL20.